The chain runs to 241 residues: Small ribosomal subunit protein uS2 (241 aa).

It belongs to the universal ribosomal protein uS2 family.

This Klebsiella pneumoniae subsp. pneumoniae (strain ATCC 700721 / MGH 78578) protein is Small ribosomal subunit protein uS2.